The primary structure comprises 396 residues: Phosphoglycerate kinase (396 aa).

Residues 22–24, arginine 37, 60–63, arginine 118, and arginine 151 contribute to the substrate site; these read DLN and HFGR. Residues lysine 201, glutamate 323, and 353 to 356 contribute to the ATP site; that span reads GGDT.

Belongs to the phosphoglycerate kinase family. In terms of assembly, monomer.

Its subcellular location is the cytoplasm. It catalyses the reaction (2R)-3-phosphoglycerate + ATP = (2R)-3-phospho-glyceroyl phosphate + ADP. Its pathway is carbohydrate degradation; glycolysis; pyruvate from D-glyceraldehyde 3-phosphate: step 2/5. This Azorhizobium caulinodans (strain ATCC 43989 / DSM 5975 / JCM 20966 / LMG 6465 / NBRC 14845 / NCIMB 13405 / ORS 571) protein is Phosphoglycerate kinase.